The chain runs to 423 residues: Zinc finger and BTB domain-containing protein 6 (423 aa).

In terms of domain architecture, BTB spans 33 to 97 (CDVSIYINDT…CYTGALEVKR (65 aa)). Ser-201 carries the phosphoserine modification. C2H2-type zinc fingers lie at residues 300–322 (HQCPRCPRGFLHVENYLRHLKMH), 325–347 (FLCLQCGKTFTQKKNLNRHIRGH), 353–375 (FQCTVCLKTFTAKSTLQDHLNIH), and 381–404 (YKCHCCDMDFKHKSALKKHLTSVH).

The protein localises to the nucleus. Functionally, may be involved in transcriptional regulation. In Mus musculus (Mouse), this protein is Zinc finger and BTB domain-containing protein 6 (Zbtb6).